A 154-amino-acid polypeptide reads, in one-letter code: Large-conductance mechanosensitive channel (154 aa).

The next 3 membrane-spanning stretches (helical) occupy residues 16 to 36 (VLGL…ISSV), 39 to 59 (DLLM…GFFI), and 89 to 109 (GQFL…FMIM).

Belongs to the MscL family. In terms of assembly, homopentamer.

The protein resides in the cell inner membrane. Its function is as follows. Channel that opens in response to stretch forces in the membrane lipid bilayer. May participate in the regulation of osmotic pressure changes within the cell. The protein is Large-conductance mechanosensitive channel of Zymomonas mobilis subsp. mobilis (strain ATCC 31821 / ZM4 / CP4).